The following is a 182-amino-acid chain: NADH-quinone oxidoreductase subunit B 2 (182 aa).

Cysteine 47, cysteine 48, cysteine 113, and cysteine 142 together coordinate [4Fe-4S] cluster.

Belongs to the complex I 20 kDa subunit family. As to quaternary structure, NDH-1 is composed of 14 different subunits. Subunits NuoB, C, D, E, F, and G constitute the peripheral sector of the complex. [4Fe-4S] cluster is required as a cofactor.

It is found in the cell inner membrane. It carries out the reaction a quinone + NADH + 5 H(+)(in) = a quinol + NAD(+) + 4 H(+)(out). NDH-1 shuttles electrons from NADH, via FMN and iron-sulfur (Fe-S) centers, to quinones in the respiratory chain. The immediate electron acceptor for the enzyme in this species is believed to be ubiquinone. Couples the redox reaction to proton translocation (for every two electrons transferred, four hydrogen ions are translocated across the cytoplasmic membrane), and thus conserves the redox energy in a proton gradient. This is NADH-quinone oxidoreductase subunit B 2 from Anaeromyxobacter sp. (strain K).